The chain runs to 239 residues: Pyridoxine 5'-phosphate synthase (239 aa).

Asn-7 serves as a coordination point for 3-amino-2-oxopropyl phosphate. 9 to 10 serves as a coordination point for 1-deoxy-D-xylulose 5-phosphate; it reads DH. Residue Arg-18 participates in 3-amino-2-oxopropyl phosphate binding. His-43 functions as the Proton acceptor in the catalytic mechanism. Residues Arg-45 and His-50 each contribute to the 1-deoxy-D-xylulose 5-phosphate site. The active-site Proton acceptor is the Glu-70. Thr-100 contacts 1-deoxy-D-xylulose 5-phosphate. His-191 acts as the Proton donor in catalysis. Residues Gly-192 and 213–214 contribute to the 3-amino-2-oxopropyl phosphate site; that span reads GH.

It belongs to the PNP synthase family. As to quaternary structure, homooctamer; tetramer of dimers.

It localises to the cytoplasm. The catalysed reaction is 3-amino-2-oxopropyl phosphate + 1-deoxy-D-xylulose 5-phosphate = pyridoxine 5'-phosphate + phosphate + 2 H2O + H(+). Its pathway is cofactor biosynthesis; pyridoxine 5'-phosphate biosynthesis; pyridoxine 5'-phosphate from D-erythrose 4-phosphate: step 5/5. Catalyzes the complicated ring closure reaction between the two acyclic compounds 1-deoxy-D-xylulose-5-phosphate (DXP) and 3-amino-2-oxopropyl phosphate (1-amino-acetone-3-phosphate or AAP) to form pyridoxine 5'-phosphate (PNP) and inorganic phosphate. The polypeptide is Pyridoxine 5'-phosphate synthase (Trichlorobacter lovleyi (strain ATCC BAA-1151 / DSM 17278 / SZ) (Geobacter lovleyi)).